The following is a 317-amino-acid chain: 4-hydroxy-3-methylbut-2-enyl diphosphate reductase (317 aa).

Cys12 serves as a coordination point for [4Fe-4S] cluster. Residues His41 and His74 each contribute to the (2E)-4-hydroxy-3-methylbut-2-enyl diphosphate site. Dimethylallyl diphosphate is bound by residues His41 and His74. Positions 41 and 74 each coordinate isopentenyl diphosphate. Cys97 provides a ligand contact to [4Fe-4S] cluster. (2E)-4-hydroxy-3-methylbut-2-enyl diphosphate is bound at residue His125. His125 is a dimethylallyl diphosphate binding site. His125 contacts isopentenyl diphosphate. Glu127 acts as the Proton donor in catalysis. Position 168 (Thr168) interacts with (2E)-4-hydroxy-3-methylbut-2-enyl diphosphate. Position 198 (Cys198) interacts with [4Fe-4S] cluster. Positions 226, 227, 228, and 270 each coordinate (2E)-4-hydroxy-3-methylbut-2-enyl diphosphate. The dimethylallyl diphosphate site is built by Ser226, Ser227, Asn228, and Ser270. Residues Ser226, Ser227, Asn228, and Ser270 each contribute to the isopentenyl diphosphate site.

This sequence belongs to the IspH family. As to quaternary structure, homodimer. Requires [4Fe-4S] cluster as cofactor.

The enzyme catalyses isopentenyl diphosphate + 2 oxidized [2Fe-2S]-[ferredoxin] + H2O = (2E)-4-hydroxy-3-methylbut-2-enyl diphosphate + 2 reduced [2Fe-2S]-[ferredoxin] + 2 H(+). It carries out the reaction dimethylallyl diphosphate + 2 oxidized [2Fe-2S]-[ferredoxin] + H2O = (2E)-4-hydroxy-3-methylbut-2-enyl diphosphate + 2 reduced [2Fe-2S]-[ferredoxin] + 2 H(+). Its pathway is isoprenoid biosynthesis; dimethylallyl diphosphate biosynthesis; dimethylallyl diphosphate from (2E)-4-hydroxy-3-methylbutenyl diphosphate: step 1/1. It functions in the pathway isoprenoid biosynthesis; isopentenyl diphosphate biosynthesis via DXP pathway; isopentenyl diphosphate from 1-deoxy-D-xylulose 5-phosphate: step 6/6. Catalyzes the conversion of 1-hydroxy-2-methyl-2-(E)-butenyl 4-diphosphate (HMBPP) into a mixture of isopentenyl diphosphate (IPP) and dimethylallyl diphosphate (DMAPP). Acts in the terminal step of the DOXP/MEP pathway for isoprenoid precursor biosynthesis. This Yersinia pestis bv. Antiqua (strain Antiqua) protein is 4-hydroxy-3-methylbut-2-enyl diphosphate reductase.